The following is a 348-amino-acid chain: Lipooligosaccharide heptosyltransferase 2 (348 aa).

This sequence belongs to the glycosyltransferase 9 family.

The enzyme catalyses an L-alpha-D-Hep-(1-&gt;5)-[alpha-Kdo-(2-&gt;4)]-alpha-Kdo-(2-&gt;6)-lipid A + ADP-L-glycero-beta-D-manno-heptose = an L-alpha-D-Hep-(1-&gt;3)-L-alpha-D-Hep-(1-&gt;5)-[alpha-Kdo-(2-&gt;4)]-alpha-Kdo-(2-&gt;6)-lipid A + ADP + H(+). It functions in the pathway bacterial outer membrane biogenesis; LOS core biosynthesis. In terms of biological role, glycosyltransferase involved in the biosynthesis of the core oligosaccharide region of lipooligosaccharide (LOS). Catalyzes the addition of a heptose unit to the heptosyl-Kdo2-lipid A module. This chain is Lipooligosaccharide heptosyltransferase 2, found in Haemophilus ducreyi (strain 35000HP / ATCC 700724).